A 337-amino-acid chain; its full sequence is MANRGGRHARTEETENAINYVQCDGLAVMKMVKHCHEESNNMDLAQGALLGLVVDKCLEITNCFPFPKSGDETMDEEMYQLTVMRRLRRVNVDHLHVGWYQSSDVGNSLSLALLESQYHYQTSIEESVVVVYDTQKSSRGFLCLKAYRLTPQAIQMYKDGDFTPEAFRNLKVGYESLFAEIPIVIKNSPLTNIMMSELNELLPEDKGHNFLDLGTASVLENHMRSLIERVDELYQEAVRYNKYQQVVFKQDTEKHRALAKLAAENAVRTSKGEPTVSEEEVIKQFRPMPVPARLTATITSGQINTHAQHIAQFCSQSLAKLFITESLQNAKEAKEIK.

An MPN domain is found at V21–A153.

Belongs to the eIF-3 subunit H family. Component of the eukaryotic translation initiation factor 3 (eIF-3) complex. The eIF-3 complex interacts with pix. Interacts with mxt.

It localises to the cytoplasm. In terms of biological role, component of the eukaryotic translation initiation factor 3 (eIF-3) complex, which is involved in protein synthesis of a specialized repertoire of mRNAs and, together with other initiation factors, stimulates binding of mRNA and methionyl-tRNAi to the 40S ribosome. The eIF-3 complex specifically targets and initiates translation of a subset of mRNAs involved in cell proliferation. This chain is Eukaryotic translation initiation factor 3 subunit H, found in Drosophila willistoni (Fruit fly).